The following is a 672-amino-acid chain: ATP-dependent zinc metalloprotease FtsH 1 (672 aa).

The interval 1 to 22 (MKKDSESNSSDKSNKEELSTGR) is disordered. The Cytoplasmic portion of the chain corresponds to 1 to 23 (MKKDSESNSSDKSNKEELSTGRR). A helical membrane pass occupies residues 24–44 (GGNPMIIALVITVLAAMLFFN). At 45–141 (QPEPSSLISA…KFSPPDNTAA (97 aa)) the chain is on the periplasmic side. A helical membrane pass occupies residues 142 to 162 (ILNLLILVGLPLAIFFFIFMM). At 163-672 (IRRTRNDMMG…TSNASARRED (510 aa)) the chain is on the cytoplasmic side. 237 to 244 (GPPGTGKT) serves as a coordination point for ATP. H458 is a binding site for Zn(2+). E459 is an active-site residue. Zn(2+) contacts are provided by H462 and D534. Residues 642-672 (RLGDEEGKVEQIMAPEGAAERTSNASARRED) are disordered. Over residues 662-672 (RTSNASARRED) the composition is skewed to polar residues.

The protein in the central section; belongs to the AAA ATPase family. This sequence in the C-terminal section; belongs to the peptidase M41 family. Homohexamer. Requires Zn(2+) as cofactor.

The protein resides in the cell inner membrane. Its function is as follows. Acts as a processive, ATP-dependent zinc metallopeptidase for both cytoplasmic and membrane proteins. Plays a role in the quality control of integral membrane proteins. The chain is ATP-dependent zinc metalloprotease FtsH 1 from Rhodopirellula baltica (strain DSM 10527 / NCIMB 13988 / SH1).